Reading from the N-terminus, the 329-residue chain is Ferredoxin--NADP reductase (329 aa).

Aspartate 28, glutamine 36, tyrosine 41, alanine 81, phenylalanine 115, aspartate 282, and threonine 323 together coordinate FAD.

This sequence belongs to the ferredoxin--NADP reductase type 2 family. As to quaternary structure, homodimer. FAD serves as cofactor.

It catalyses the reaction 2 reduced [2Fe-2S]-[ferredoxin] + NADP(+) + H(+) = 2 oxidized [2Fe-2S]-[ferredoxin] + NADPH. This Anaplasma marginale (strain St. Maries) protein is Ferredoxin--NADP reductase.